A 350-amino-acid chain; its full sequence is Holliday junction branch migration complex subunit RuvB (350 aa).

Residues Met-1–Tyr-186 are large ATPase domain (RuvB-L). ATP is bound by residues Leu-25, Arg-26, Gly-67, Lys-70, Thr-71, Thr-72, Glu-133 to Phe-135, Arg-176, Tyr-186, and Arg-223. Thr-71 contacts Mg(2+). The tract at residues Glu-187–Glu-257 is small ATPAse domain (RuvB-S). Positions Gly-260 to Pro-350 are head domain (RuvB-H). Positions 296, 315, and 320 each coordinate DNA.

This sequence belongs to the RuvB family. As to quaternary structure, homohexamer. Forms an RuvA(8)-RuvB(12)-Holliday junction (HJ) complex. HJ DNA is sandwiched between 2 RuvA tetramers; dsDNA enters through RuvA and exits via RuvB. An RuvB hexamer assembles on each DNA strand where it exits the tetramer. Each RuvB hexamer is contacted by two RuvA subunits (via domain III) on 2 adjacent RuvB subunits; this complex drives branch migration. In the full resolvosome a probable DNA-RuvA(4)-RuvB(12)-RuvC(2) complex forms which resolves the HJ.

It is found in the cytoplasm. The catalysed reaction is ATP + H2O = ADP + phosphate + H(+). The RuvA-RuvB-RuvC complex processes Holliday junction (HJ) DNA during genetic recombination and DNA repair, while the RuvA-RuvB complex plays an important role in the rescue of blocked DNA replication forks via replication fork reversal (RFR). RuvA specifically binds to HJ cruciform DNA, conferring on it an open structure. The RuvB hexamer acts as an ATP-dependent pump, pulling dsDNA into and through the RuvAB complex. RuvB forms 2 homohexamers on either side of HJ DNA bound by 1 or 2 RuvA tetramers; 4 subunits per hexamer contact DNA at a time. Coordinated motions by a converter formed by DNA-disengaged RuvB subunits stimulates ATP hydrolysis and nucleotide exchange. Immobilization of the converter enables RuvB to convert the ATP-contained energy into a lever motion, pulling 2 nucleotides of DNA out of the RuvA tetramer per ATP hydrolyzed, thus driving DNA branch migration. The RuvB motors rotate together with the DNA substrate, which together with the progressing nucleotide cycle form the mechanistic basis for DNA recombination by continuous HJ branch migration. Branch migration allows RuvC to scan DNA until it finds its consensus sequence, where it cleaves and resolves cruciform DNA. The sequence is that of Holliday junction branch migration complex subunit RuvB from Rhodospirillum rubrum (strain ATCC 11170 / ATH 1.1.1 / DSM 467 / LMG 4362 / NCIMB 8255 / S1).